The sequence spans 231 residues: MRQYNDLFKIIHREGYIFIASFALVSFLLASFNEKLGCIGFIATAWCIYFFRNPDRFVPISDDLVISPADGIIQEIKEALPPQELGLGDVEMIRVSIFLNIFNVHVNRIPANGKILALHYNPGKFFNASLDKASIYNERQSVLMETDKGQKIVFVQIAGLIARRIVCDLEEGNEVKTGERYGIIRFGSRVDVYLPLKTALLVSKGQTAIGGETIIADFGRKKIAEFKFERR.

Ser188 acts as the Schiff-base intermediate with substrate; via pyruvic acid in catalysis. Position 188 is a pyruvic acid (Ser); by autocatalysis (Ser188).

It belongs to the phosphatidylserine decarboxylase family. PSD-A subfamily. In terms of assembly, heterodimer of a large membrane-associated beta subunit and a small pyruvoyl-containing alpha subunit. It depends on pyruvate as a cofactor. Is synthesized initially as an inactive proenzyme. Formation of the active enzyme involves a self-maturation process in which the active site pyruvoyl group is generated from an internal serine residue via an autocatalytic post-translational modification. Two non-identical subunits are generated from the proenzyme in this reaction, and the pyruvate is formed at the N-terminus of the alpha chain, which is derived from the carboxyl end of the proenzyme. The post-translation cleavage follows an unusual pathway, termed non-hydrolytic serinolysis, in which the side chain hydroxyl group of the serine supplies its oxygen atom to form the C-terminus of the beta chain, while the remainder of the serine residue undergoes an oxidative deamination to produce ammonia and the pyruvoyl prosthetic group on the alpha chain.

The protein resides in the cell membrane. The catalysed reaction is a 1,2-diacyl-sn-glycero-3-phospho-L-serine + H(+) = a 1,2-diacyl-sn-glycero-3-phosphoethanolamine + CO2. The protein operates within phospholipid metabolism; phosphatidylethanolamine biosynthesis; phosphatidylethanolamine from CDP-diacylglycerol: step 2/2. Its function is as follows. Catalyzes the formation of phosphatidylethanolamine (PtdEtn) from phosphatidylserine (PtdSer). The chain is Phosphatidylserine decarboxylase proenzyme from Rickettsia akari (strain Hartford).